Consider the following 328-residue polypeptide: Chlorate reductase subunit beta (328 aa).

3 4Fe-4S ferredoxin-type domains span residues 6 to 35, 125 to 156, and 158 to 187; these read VAYVFDLNKCIGCHTCTMACKQLWTNRDGR, NHSFYLPRICNHCSNPACLAACPTKAIYKRPE, and GIVVVDQTRCRGYRYCVKACPYGKMYFNLQ. 7 residues coordinate [4Fe-4S] cluster: Cys-15, Cys-18, Cys-21, Cys-25, Cys-134, Cys-137, and Cys-142. 3 residues coordinate [3Fe-4S] cluster: Cys-146, Cys-167, and Cys-173. Residues Cys-177, Cys-194, Cys-197, Cys-209, and Cys-213 each coordinate [4Fe-4S] cluster.

Heterotrimer of alpha, beta and gamma subunits. It depends on [3Fe-4S] cluster as a cofactor. [4Fe-4S] cluster is required as a cofactor.

Its subcellular location is the periplasm. Electron transfer subunit of the terminal reductase during anaerobic growth on chlorate. In Ideonella dechloratans, this protein is Chlorate reductase subunit beta (clrB).